The sequence spans 506 residues: Acetaldehyde dehydrogenase 2 (506 aa).

Position 240 to 245 (240 to 245 (GETTTG)) interacts with NAD(+). Catalysis depends on residues glutamate 262 and cysteine 301.

It belongs to the aldehyde dehydrogenase family.

It catalyses the reaction an aldehyde + NAD(+) + H2O = a carboxylate + NADH + 2 H(+). It participates in alcohol metabolism; ethanol degradation; acetate from ethanol: step 2/2. Its pathway is ketone degradation; acetoin degradation. Functionally, involved in the catabolism of acetoin and ethanol. The polypeptide is Acetaldehyde dehydrogenase 2 (acoD) (Cupriavidus necator (strain ATCC 17699 / DSM 428 / KCTC 22496 / NCIMB 10442 / H16 / Stanier 337) (Ralstonia eutropha)).